The following is an 825-amino-acid chain: Exocyst complex component SEC10a (825 aa).

A coiled-coil region spans residues 244–266 (RGLEVAVANLQDYCNELENRLLS).

Belongs to the SEC10 family. As to quaternary structure, the exocyst complex is composed of SEC3, SEC5, SEC6, SEC8, SEC10, EXO70A1 and EXO84B. Interacts with EXO84B. Binds to EXO70E2. Binds directly to B1L. In terms of tissue distribution, expressed in seedlings, roots, leaves and flowers.

It is found in the cytoplasm. Its subcellular location is the cytosol. It localises to the secreted. The protein resides in the extracellular exosome. Functionally, component of the exocyst complex involved in the docking of exocytic vesicles with fusion sites on the plasma membrane during regulated or polarized secretion. Involved in polarized cell growth and organ morphogenesis. During cytokinesis, involved in cell plate initiation, cell plate maturation and formation of new primary cell wall. In Arabidopsis thaliana (Mouse-ear cress), this protein is Exocyst complex component SEC10a.